A 324-amino-acid polypeptide reads, in one-letter code: uncharacterized protein (324 aa).

Residues 1-58 enclose the HTH lysR-type domain; that stretch reads MDIKVMEYAAEIARRQSFTKAAEHLHIAQPSLSQQIKKLEAELGLTLFHRSHGSVTLT. The H-T-H motif DNA-binding region spans 18 to 37; sequence FTKAAEHLHIAQPSLSQQIK.

It belongs to the LysR transcriptional regulatory family.

This is an uncharacterized protein from Bacillus subtilis (strain 168).